Here is a 326-residue protein sequence, read N- to C-terminus: 5-dehydro-2-deoxygluconokinase (326 aa).

This sequence belongs to the carbohydrate kinase PfkB family.

The enzyme catalyses 5-dehydro-2-deoxy-D-gluconate + ATP = 6-phospho-5-dehydro-2-deoxy-D-gluconate + ADP + H(+). The protein operates within polyol metabolism; myo-inositol degradation into acetyl-CoA; acetyl-CoA from myo-inositol: step 5/7. Catalyzes the phosphorylation of 5-dehydro-2-deoxy-D-gluconate (2-deoxy-5-keto-D-gluconate or DKG) to 6-phospho-5-dehydro-2-deoxy-D-gluconate (DKGP). The polypeptide is 5-dehydro-2-deoxygluconokinase (Lacticaseibacillus casei (Lactobacillus casei)).